A 684-amino-acid chain; its full sequence is Glycine--tRNA ligase beta subunit (684 aa).

This sequence belongs to the class-II aminoacyl-tRNA synthetase family. As to quaternary structure, tetramer of two alpha and two beta subunits.

The protein localises to the cytoplasm. The catalysed reaction is tRNA(Gly) + glycine + ATP = glycyl-tRNA(Gly) + AMP + diphosphate. In Pseudomonas syringae pv. syringae (strain B728a), this protein is Glycine--tRNA ligase beta subunit.